A 339-amino-acid polypeptide reads, in one-letter code: MKGVTIHNFCYSYFKVCLLVMSLAYGSAEWDGSSSQIAKTIIVNPNDARYFKTVQSAIDSIPLQNQDWIRILISNGIYSEKVTIPRGKGYIYMQGGGIEKTIIAYGDHQLTNTSATFTSYPSNIIITGITFKNKYNIASSSSPTKPAVAAMMLGDKYAIIDSSFDGFQDTLYDDYGRHYYKRCVISGGIDFIFGGAQSIFEGCTLKLRVGIYPPNEVYGTITAQGRDSPTDKGGFVFKDCTVMGSGKALLGRAWKSYSRVIFYRSMFSDNILPIGWDAWKAKGQEGHITFVEFGCTGVGADTSKRVPWLTKASEKDVLQFTNLTFIDEEGWLSRLPIKF.

Residues methionine 1–alanine 28 form the signal peptide. Asparagine 112 carries N-linked (GlcNAc...) asparagine glycosylation. Substrate is bound at residue threonine 116. Aspartate 169 (proton donor) is an active-site residue. Catalysis depends on aspartate 190, which acts as the Nucleophile. Substrate-binding residues include arginine 252 and tryptophan 254. The N-linked (GlcNAc...) asparagine glycan is linked to asparagine 322.

It belongs to the pectinesterase family. Expressed in siliques.

It localises to the secreted. The protein resides in the cell wall. The enzyme catalyses [(1-&gt;4)-alpha-D-galacturonosyl methyl ester](n) + n H2O = [(1-&gt;4)-alpha-D-galacturonosyl](n) + n methanol + n H(+). It functions in the pathway glycan metabolism; pectin degradation; 2-dehydro-3-deoxy-D-gluconate from pectin: step 1/5. In terms of biological role, acts in the modification of cell walls via demethylesterification of cell wall pectin. The protein is Putative pectinesterase 10 (PME10) of Arabidopsis thaliana (Mouse-ear cress).